The primary structure comprises 100 residues: Replication restart protein PriB (100 aa).

Residues 1–100 enclose the SSB domain; sequence MTNRMELSGT…VLHADDIIHI (100 aa).

It belongs to the PriB family. In terms of assembly, homodimer. Interacts with PriA and DnaT. Component of the replication restart primosome. Primosome assembly occurs via a 'hand-off' mechanism. PriA binds to replication forks, subsequently PriB then DnaT bind; DnaT then displaces ssDNA to generate the helicase loading substrate.

In terms of biological role, involved in the restart of stalled replication forks, which reloads the replicative helicase on sites other than the origin of replication; the PriA-PriB pathway is the major replication restart pathway. During primosome assembly it facilitates complex formation between PriA and DnaT on DNA; stabilizes PriA on DNA. Stimulates the DNA unwinding activity of PriA helicase. The sequence is that of Replication restart protein PriB from Vibrio vulnificus (strain CMCP6).